We begin with the raw amino-acid sequence, 203 residues long: Probable GTP-binding protein EngB (203 aa).

In terms of domain architecture, EngB-type G spans 21–196 (GAPEIAFLGR…WKKIFEAAGT (176 aa)). Residues 29–36 (GRSNVGKS), 55–59 (GRTQT), 79–82 (DLPG), 146–149 (TKID), and 175–177 (FSA) contribute to the GTP site. 2 residues coordinate Mg(2+): Ser36 and Thr57.

This sequence belongs to the TRAFAC class TrmE-Era-EngA-EngB-Septin-like GTPase superfamily. EngB GTPase family. It depends on Mg(2+) as a cofactor.

Its function is as follows. Necessary for normal cell division and for the maintenance of normal septation. This chain is Probable GTP-binding protein EngB, found in Koribacter versatilis (strain Ellin345).